A 459-amino-acid chain; its full sequence is Bifunctional protein GlmU (459 aa).

The interval 1 to 229 (MSNFAIXLAA…FDESLGVNDR (229 aa)) is pyrophosphorylase. UDP-N-acetyl-alpha-D-glucosamine is bound by residues 8 to 11 (LAAG), K22, Q72, and 77 to 78 (GT). D102 serves as a coordination point for Mg(2+). Positions 139, 154, 169, and 227 each coordinate UDP-N-acetyl-alpha-D-glucosamine. Position 227 (N227) interacts with Mg(2+). The linker stretch occupies residues 230–250 (VALATAESVMRRRINHKHMVN). Residues 251-459 (GVSFVNPEAT…TRLPHHPKNQ (209 aa)) form an N-acetyltransferase region. UDP-N-acetyl-alpha-D-glucosamine is bound by residues R332 and K350. The active-site Proton acceptor is H362. UDP-N-acetyl-alpha-D-glucosamine-binding residues include Y365 and N376. Residues A379, 385–386 (NY), S404, A422, and R439 each bind acetyl-CoA.

It in the N-terminal section; belongs to the N-acetylglucosamine-1-phosphate uridyltransferase family. The protein in the C-terminal section; belongs to the transferase hexapeptide repeat family. As to quaternary structure, homotrimer. The cofactor is Mg(2+).

The protein localises to the cytoplasm. It carries out the reaction alpha-D-glucosamine 1-phosphate + acetyl-CoA = N-acetyl-alpha-D-glucosamine 1-phosphate + CoA + H(+). The enzyme catalyses N-acetyl-alpha-D-glucosamine 1-phosphate + UTP + H(+) = UDP-N-acetyl-alpha-D-glucosamine + diphosphate. It functions in the pathway nucleotide-sugar biosynthesis; UDP-N-acetyl-alpha-D-glucosamine biosynthesis; N-acetyl-alpha-D-glucosamine 1-phosphate from alpha-D-glucosamine 6-phosphate (route II): step 2/2. The protein operates within nucleotide-sugar biosynthesis; UDP-N-acetyl-alpha-D-glucosamine biosynthesis; UDP-N-acetyl-alpha-D-glucosamine from N-acetyl-alpha-D-glucosamine 1-phosphate: step 1/1. It participates in bacterial outer membrane biogenesis; LPS lipid A biosynthesis. Functionally, catalyzes the last two sequential reactions in the de novo biosynthetic pathway for UDP-N-acetylglucosamine (UDP-GlcNAc). The C-terminal domain catalyzes the transfer of acetyl group from acetyl coenzyme A to glucosamine-1-phosphate (GlcN-1-P) to produce N-acetylglucosamine-1-phosphate (GlcNAc-1-P), which is converted into UDP-GlcNAc by the transfer of uridine 5-monophosphate (from uridine 5-triphosphate), a reaction catalyzed by the N-terminal domain. In Streptococcus pneumoniae serotype 19F (strain G54), this protein is Bifunctional protein GlmU.